The chain runs to 311 residues: Methenyltetrahydromethanopterin cyclohydrolase (311 aa).

This sequence belongs to the MCH family.

It is found in the cytoplasm. The catalysed reaction is 5,10-methenyl-5,6,7,8-tetrahydromethanopterin + H2O = N(5)-formyl-5,6,7,8-tetrahydromethanopterin + H(+). Its function is as follows. Catalyzes the hydrolysis of methenyl-H(4)MPT(+) to 5-formyl-H(4)MPT. This is Methenyltetrahydromethanopterin cyclohydrolase from Halobacterium salinarum (strain ATCC 29341 / DSM 671 / R1).